The chain runs to 854 residues: DNA mismatch repair protein MutS (854 aa).

Residue 608 to 615 (GPNMAGKS) coordinates ATP.

Belongs to the DNA mismatch repair MutS family.

In terms of biological role, this protein is involved in the repair of mismatches in DNA. It is possible that it carries out the mismatch recognition step. This protein has a weak ATPase activity. This Leuconostoc mesenteroides subsp. mesenteroides (strain ATCC 8293 / DSM 20343 / BCRC 11652 / CCM 1803 / JCM 6124 / NCDO 523 / NBRC 100496 / NCIMB 8023 / NCTC 12954 / NRRL B-1118 / 37Y) protein is DNA mismatch repair protein MutS.